The following is a 209-amino-acid chain: Imidazole glycerol phosphate synthase subunit HisH (209 aa).

A Glutamine amidotransferase type-1 domain is found at 1–205; the sequence is MIAIIDYGMG…KGVVETWKSS (205 aa). The active-site Nucleophile is Cys79. Active-site residues include His180 and Glu182.

As to quaternary structure, heterodimer of HisH and HisF.

Its subcellular location is the cytoplasm. It catalyses the reaction 5-[(5-phospho-1-deoxy-D-ribulos-1-ylimino)methylamino]-1-(5-phospho-beta-D-ribosyl)imidazole-4-carboxamide + L-glutamine = D-erythro-1-(imidazol-4-yl)glycerol 3-phosphate + 5-amino-1-(5-phospho-beta-D-ribosyl)imidazole-4-carboxamide + L-glutamate + H(+). The enzyme catalyses L-glutamine + H2O = L-glutamate + NH4(+). It participates in amino-acid biosynthesis; L-histidine biosynthesis; L-histidine from 5-phospho-alpha-D-ribose 1-diphosphate: step 5/9. In terms of biological role, IGPS catalyzes the conversion of PRFAR and glutamine to IGP, AICAR and glutamate. The HisH subunit catalyzes the hydrolysis of glutamine to glutamate and ammonia as part of the synthesis of IGP and AICAR. The resulting ammonia molecule is channeled to the active site of HisF. In Bacillus thuringiensis subsp. konkukian (strain 97-27), this protein is Imidazole glycerol phosphate synthase subunit HisH.